Here is a 335-residue protein sequence, read N- to C-terminus: Olfactory receptor 9K2 (335 aa).

Over 1 to 50 (MLGSKPRVHLYILPCASQQVSTMGDRGTSNHSEMTDFILAGFRVRPELHI) the chain is Extracellular. An N-linked (GlcNAc...) asparagine glycan is attached at asparagine 30. A helical transmembrane segment spans residues 51-71 (LLFLLFLFVYAMILLGNVGMM). The Cytoplasmic segment spans residues 72–79 (TIIMTDPR). The helical transmembrane segment at 80–100 (LNTPMYFFLGNLSFIDLFYSS) threads the bilayer. At 101 to 124 (VIEPKAMINFWSENKSISFAGCVA) the chain is on the extracellular side. Asparagine 114 carries an N-linked (GlcNAc...) asparagine glycan. Cysteine 122 and cysteine 214 are disulfide-bonded. Residues 125–145 (QLFLFALLIVTEGFLLAAMAY) traverse the membrane as a helical segment. At 146 to 164 (DRFIAICNPLLYSVQMSTR) the chain is on the cytoplasmic side. Residues 165–185 (LCTQLVAGSYFCGCISSVIQT) form a helical membrane-spanning segment. The Extracellular portion of the chain corresponds to 186-222 (SMTFTLSFCASRAVDHFYCDSRPLQRLSCSDLFIHRM). The chain crosses the membrane as a helical span at residues 223-242 (ISFSLSCIIILPTIIVIIVS). Topologically, residues 243–262 (YMYIVSTVLKIHSTEGHKKA) are cytoplasmic. A helical transmembrane segment spans residues 263 to 283 (FSTCSSHLGVVSVLYGAVFFM). The Extracellular segment spans residues 284–296 (YLTPDRFPELSKV). Residues 316 to 335 (RNKDVQEALKKFLEKKNIIL) lie on the Cytoplasmic side of the membrane.

It belongs to the G-protein coupled receptor 1 family.

It is found in the cell membrane. Functionally, odorant receptor. This Homo sapiens (Human) protein is Olfactory receptor 9K2 (OR9K2).